The chain runs to 275 residues: Trypsin-3 (275 aa).

Residues 1 to 22 (MISNKIAILLAVLVVAVACAQA) form the signal peptide. Positions 23-48 (RVALKHRSVQALPRFLPRPKYDVGHR) are cleaved as a propeptide — activation peptide. The 226-residue stretch at 49 to 274 (IVGGFEIDVS…VRDWVRENSG (226 aa)) folds into the Peptidase S1 domain. Cys-74 and Cys-90 are oxidised to a cystine. Catalysis depends on charge relay system residues His-89 and Asp-134. Disulfide bonds link Cys-199–Cys-215 and Cys-226–Cys-250. Ser-230 (charge relay system) is an active-site residue.

It belongs to the peptidase S1 family. In terms of tissue distribution, expressed in the midgut. Expression levels drop a few hours after blood feeding and pick up again 28 hours later.

The protein resides in the secreted. The catalysed reaction is Preferential cleavage: Arg-|-Xaa, Lys-|-Xaa.. Its function is as follows. Constitutive trypsin that is expressed 2 days after emergence, coinciding with host seeking behavior of the female. The chain is Trypsin-3 (TRYP3) from Anopheles gambiae (African malaria mosquito).